The chain runs to 127 residues: Small ribosomal subunit protein uS13 (127 aa).

A compositionally biased stretch (basic residues) spans 95–118 (GLPVRGQRTHTNARTRKGPKKGLV). A disordered region spans residues 95–127 (GLPVRGQRTHTNARTRKGPKKGLVRKAAAPAPK).

Belongs to the universal ribosomal protein uS13 family. In terms of assembly, part of the 30S ribosomal subunit. Forms a loose heterodimer with protein S19. Forms two bridges to the 50S subunit in the 70S ribosome.

Functionally, located at the top of the head of the 30S subunit, it contacts several helices of the 16S rRNA. In the 70S ribosome it contacts the 23S rRNA (bridge B1a) and protein L5 of the 50S subunit (bridge B1b), connecting the 2 subunits; these bridges are implicated in subunit movement. Contacts the tRNAs in the A and P-sites. The protein is Small ribosomal subunit protein uS13 of Anaeromyxobacter sp. (strain Fw109-5).